The primary structure comprises 509 residues: Aspartic proteinase oryzasin-1 (509 aa).

The first 24 residues, Met-1 to Ala-24, serve as a signal peptide directing secretion. Residues Ala-25 to Gly-67 constitute a propeptide, activation peptide. The 422-residue stretch at Tyr-85–Ala-506 folds into the Peptidase A1 domain. Asp-103 is an active-site residue. A disulfide bridge links Cys-116 with Cys-122. Asn-252 carries N-linked (GlcNAc...) asparagine glycosylation. An intrachain disulfide couples Cys-281 to Cys-285. Asp-290 is an active-site residue. The Saposin B-type domain maps to Val-315 to Pro-420. 4 disulfides stabilise this stretch: Cys-320–Cys-414, Cys-345–Cys-386, Cys-351–Cys-383, and Cys-428–Cys-465. N-linked (GlcNAc...) asparagine glycosylation occurs at Asn-400.

The protein belongs to the peptidase A1 family.

The protein localises to the vacuole. Functionally, involved in the breakdown of propeptides of storage proteins in protein-storage vacuoles. This chain is Aspartic proteinase oryzasin-1, found in Oryza sativa subsp. japonica (Rice).